A 696-amino-acid chain; its full sequence is Polyribonucleotide nucleotidyltransferase (696 aa).

Mg(2+) contacts are provided by Asp486 and Asp492. One can recognise a KH domain in the interval 553-612 (PRITQKQIPKDRIGELIGPGGKMIRAIIEQSGSEISVDDSGKVTIASPSEESKEKAIAMI). Positions 622–690 (GKIYDGVIKR…KMGKIDLSRK (69 aa)) constitute an S1 motif domain.

The protein belongs to the polyribonucleotide nucleotidyltransferase family. Requires Mg(2+) as cofactor.

The protein localises to the cytoplasm. It carries out the reaction RNA(n+1) + phosphate = RNA(n) + a ribonucleoside 5'-diphosphate. Its function is as follows. Involved in mRNA degradation. Catalyzes the phosphorolysis of single-stranded polyribonucleotides processively in the 3'- to 5'-direction. The chain is Polyribonucleotide nucleotidyltransferase from Leptospira biflexa serovar Patoc (strain Patoc 1 / ATCC 23582 / Paris).